The primary structure comprises 279 residues: 5'-nucleotidase SurE (279 aa).

The a divalent metal cation site is built by Asp28, Asp29, Ser59, and Asn113.

The protein belongs to the SurE nucleotidase family. The cofactor is a divalent metal cation.

It is found in the cytoplasm. It carries out the reaction a ribonucleoside 5'-phosphate + H2O = a ribonucleoside + phosphate. Nucleotidase that shows phosphatase activity on nucleoside 5'-monophosphates. The polypeptide is 5'-nucleotidase SurE (Methanospirillum hungatei JF-1 (strain ATCC 27890 / DSM 864 / NBRC 100397 / JF-1)).